A 93-amino-acid polypeptide reads, in one-letter code: Small ribosomal subunit protein uS19 (93 aa).

Belongs to the universal ribosomal protein uS19 family.

Its function is as follows. Protein S19 forms a complex with S13 that binds strongly to the 16S ribosomal RNA. This Saccharopolyspora erythraea (strain ATCC 11635 / DSM 40517 / JCM 4748 / NBRC 13426 / NCIMB 8594 / NRRL 2338) protein is Small ribosomal subunit protein uS19.